The chain runs to 645 residues: UvrABC system protein C (645 aa).

The interval 1 to 20 is disordered; sequence MTDLPPHSSHHPADQGEPLV. A GIY-YIG domain is found at 40-118; sequence YSPGVYRMLS…IKRMKPRFNI (79 aa). The UVR domain occupies 228–263; that stretch reads TELQQRLVAEMEQASQELNYERAASIRDRIRGFASI.

It belongs to the UvrC family. Interacts with UvrB in an incision complex.

It is found in the cytoplasm. In terms of biological role, the UvrABC repair system catalyzes the recognition and processing of DNA lesions. UvrC both incises the 5' and 3' sides of the lesion. The N-terminal half is responsible for the 3' incision and the C-terminal half is responsible for the 5' incision. This is UvrABC system protein C from Gluconobacter oxydans (strain 621H) (Gluconobacter suboxydans).